Reading from the N-terminus, the 210-residue chain is Kinetochore protein Spc25 (210 aa).

Residues 42–106 (TMENIKRQQH…KKKQERDKLI (65 aa)) adopt a coiled-coil conformation.

Belongs to the SPC25 family. Component of the Ndc80 complex, which is composed of Ndc80, Nuf2 and Spc25.

Its subcellular location is the nucleus. It localises to the chromosome. It is found in the centromere. The protein localises to the kinetochore. Acts as a component of the essential kinetochore-associated Ndc80 complex, which is required for chromosome segregation and spindle checkpoint activity during meiosis and mitosis. Required for kinetochore integrity and the organization of stable microtubule binding sites in the outer plate of the kinetochore. Participates in SAC signaling that responds specifically to disruptions in spindle microtubule dynamics. The NDC80 complex synergistically enhances the affinity of the SKA1 complex for microtubules and may allow the NDC80 complex to track depolymerizing microtubules. The sequence is that of Kinetochore protein Spc25 from Drosophila virilis (Fruit fly).